A 223-amino-acid polypeptide reads, in one-letter code: MKMADGSTILRRNRPGTKSKDFCRWPDEPLEEMDSTLAVQQYIQQLIKRDPSNVELILTMPEAQDEGVWKYEHLRQFCMELNGLAVRLQKECSPSTCTQMTATDQWIFLCAAHKTPKECPAIDYTRHTLDGAACLLNSNKYFPSRVSIKESSVTKLGSVCRRVYRIFSHAYFHHRRIFDEFEAETYLCHRFTHFVTKYNLMSKENLIVPINVGENAAPGESEA.

The disordered stretch occupies residues 1-21; the sequence is MKMADGSTILRRNRPGTKSKD. 4 residues coordinate Zn(2+): Cys92, Cys97, His169, and His174.

This sequence belongs to the MOB1/phocein family.

The sequence is that of MOB kinase activator-like 4 (Mob4) from Drosophila melanogaster (Fruit fly).